We begin with the raw amino-acid sequence, 354 residues long: Uroporphyrinogen decarboxylase (354 aa).

Residues 27-31 (RQAGR), Asp77, Tyr154, Thr209, and His327 contribute to the substrate site.

It belongs to the uroporphyrinogen decarboxylase family. As to quaternary structure, homodimer.

It localises to the cytoplasm. It catalyses the reaction uroporphyrinogen III + 4 H(+) = coproporphyrinogen III + 4 CO2. It functions in the pathway porphyrin-containing compound metabolism; protoporphyrin-IX biosynthesis; coproporphyrinogen-III from 5-aminolevulinate: step 4/4. In terms of biological role, catalyzes the decarboxylation of four acetate groups of uroporphyrinogen-III to yield coproporphyrinogen-III. The polypeptide is Uroporphyrinogen decarboxylase (Escherichia coli O6:K15:H31 (strain 536 / UPEC)).